Reading from the N-terminus, the 445-residue chain is Tubulin beta-2B chain (445 aa).

Residues 1-4 (MREI) carry the MREI motif motif. Gln-11 is a GTP binding site. The residue at position 40 (Ser-40) is a Phosphoserine. Thr-55 carries the phosphothreonine modification. Position 58 is an N6-acetyllysine; alternate (Lys-58). Lys-58 carries the N6-succinyllysine; alternate modification. A Glycyl lysine isopeptide (Lys-Gly) (interchain with G-Cter in ubiquitin); alternate cross-link involves residue Lys-58. GTP is bound by residues Glu-69, Ser-138, Gly-142, Thr-143, and Gly-144. Glu-69 lines the Mg(2+) pocket. At Ser-172 the chain carries Phosphoserine; by CDK1. Residues Asn-204 and Asn-226 each contribute to the GTP site. Thr-285 and Thr-290 each carry phosphothreonine. An Omega-N-methylarginine modification is found at Arg-318. Residue Lys-324 forms a Glycyl lysine isopeptide (Lys-Gly) (interchain with G-Cter in ubiquitin) linkage. A disordered region spans residues 422-445 (YQQYQDATADEQGEFEEEEGEDEA). The span at 429–445 (TADEQGEFEEEEGEDEA) shows a compositional bias: acidic residues. A 5-glutamyl polyglutamate modification is found at Glu-438.

Belongs to the tubulin family. In terms of assembly, dimer of alpha and beta chains. A typical microtubule is a hollow water-filled tube with an outer diameter of 25 nm and an inner diameter of 15 nM. Alpha-beta heterodimers associate head-to-tail to form protofilaments running lengthwise along the microtubule wall with the beta-tubulin subunit facing the microtubule plus end conferring a structural polarity. Microtubules usually have 13 protofilaments but different protofilament numbers can be found in some organisms and specialized cells. Mg(2+) serves as cofactor. Post-translationally, some glutamate residues at the C-terminus are polyglycylated, resulting in polyglycine chains on the gamma-carboxyl group. Glycylation is mainly limited to tubulin incorporated into axonemes (cilia and flagella) whereas glutamylation is prevalent in neuronal cells, centrioles, axonemes, and the mitotic spindle. Both modifications can coexist on the same protein on adjacent residues, and lowering polyglycylation levels increases polyglutamylation, and reciprocally. The precise function of polyglycylation is still unclear. Some glutamate residues at the C-terminus are polyglutamylated, resulting in polyglutamate chains on the gamma-carboxyl group. Polyglutamylation plays a key role in microtubule severing by spastin (SPAST). SPAST preferentially recognizes and acts on microtubules decorated with short polyglutamate tails: severing activity by SPAST increases as the number of glutamates per tubulin rises from one to eight, but decreases beyond this glutamylation threshold. In terms of processing, phosphorylated on Ser-172 by CDK1 during the cell cycle, from metaphase to telophase, but not in interphase. This phosphorylation inhibits tubulin incorporation into microtubules.

It localises to the cytoplasm. It is found in the cytoskeleton. Functionally, tubulin is the major constituent of microtubules, a cylinder consisting of laterally associated linear protofilaments composed of alpha- and beta-tubulin heterodimers. Microtubules grow by the addition of GTP-tubulin dimers to the microtubule end, where a stabilizing cap forms. Below the cap, tubulin dimers are in GDP-bound state, owing to GTPase activity of alpha-tubulin. Implicated in neuronal migration. This chain is Tubulin beta-2B chain (TUBB2B), found in Bos taurus (Bovine).